Reading from the N-terminus, the 128-residue chain is Small ribosomal subunit protein uS12 (128 aa).

At aspartate 89 the chain carries 3-methylthioaspartic acid. A disordered region spans residues 101-128 (SLDTSGVADRRQGRSKYGAKRPKGAAAK). The span at 113 to 128 (GRSKYGAKRPKGAAAK) shows a compositional bias: basic residues.

Belongs to the universal ribosomal protein uS12 family. Part of the 30S ribosomal subunit. Contacts proteins S8 and S17. May interact with IF1 in the 30S initiation complex.

With S4 and S5 plays an important role in translational accuracy. Functionally, interacts with and stabilizes bases of the 16S rRNA that are involved in tRNA selection in the A site and with the mRNA backbone. Located at the interface of the 30S and 50S subunits, it traverses the body of the 30S subunit contacting proteins on the other side and probably holding the rRNA structure together. The combined cluster of proteins S8, S12 and S17 appears to hold together the shoulder and platform of the 30S subunit. The chain is Small ribosomal subunit protein uS12 from Prosthecochloris aestuarii (strain DSM 271 / SK 413).